We begin with the raw amino-acid sequence, 350 residues long: Dauer larva development regulatory growth factor daf-7 (350 aa).

The N-terminal stretch at methionine 1–threonine 21 is a signal peptide. A propeptide spanning residues phenylalanine 22–arginine 234 is cleaved from the precursor. Asparagine 23 is a glycosylation site (N-linked (GlcNAc...) asparagine). 4 disulfides stabilise this stretch: cysteine 241-cysteine 251, cysteine 250-cysteine 315, cysteine 278-cysteine 347, and cysteine 282-cysteine 349.

Belongs to the TGF-beta family. As to expression, expressed in the chemosensory neurons, including in the ASJ neurons in males. Expressed in the ASI neurons.

The protein resides in the secreted. Under harsh environmental conditions, larvae enter a developmentally arrested state known as dauer; TGF-beta-like daf-7 acts to inhibit dauer larva formation and promote growth. May be a ligand to cell surface receptor daf-4. May act as a negative regulator of dauer larva development by transducing chemosensory information from ASI neurons. Involved in sensitivity to CO2 levels. Involved in mate searching behavior of males, acting in concert with the neuropeptide pdf-1. In AWC neurons, acts to promote expression of srsx-3, a member of the GPCR family. This is Dauer larva development regulatory growth factor daf-7 from Caenorhabditis elegans.